The following is a 139-amino-acid chain: mRNA stability protein mug134 (139 aa).

Residues 83–139 form a disordered region; sequence IGKEIPSPDTIPHRVVSAGSPNKEPSLHTKRPSESSPSGASSRRESVTRHDLESNEN. Basic and acidic residues predominate over residues 124–139; it reads SRRESVTRHDLESNEN.

It belongs to the endosulfine family.

Its subcellular location is the nucleus. It localises to the cytoplasm. Functionally, plays an essential role in initiation of the G0 program by preventing the degradation of specific nutrient-regulated mRNAs via the 5'-3' mRNA decay pathway. In Schizosaccharomyces pombe (strain 972 / ATCC 24843) (Fission yeast), this protein is mRNA stability protein mug134 (mug134).